Here is a 228-residue protein sequence, read N- to C-terminus: Elongation factor 1-beta 1 (228 aa).

An N-acetylalanine modification is found at A2. One can recognise a GST C-terminal domain in the interval 14 to 65; it reads LKTLEEHLAGKTYISGDQLSVDDVKVYAAVLENPGDGFPNASKWYDSVASHL. Positions 75 to 139 are disordered; it reads GVRVGGGVAP…DTKKTKESGK (65 aa). The span at 95 to 115 shows a compositional bias: acidic residues; the sequence is PAADGDGDDDDDIDLFADETE. The span at 116-138 shows a compositional bias: basic and acidic residues; the sequence is DEKKAAEEREAAKKDTKKTKESG.

It belongs to the EF-1-beta/EF-1-delta family. As to quaternary structure, EF-1 is composed of 4 subunits: alpha, beta (1B-alpha=beta'), delta (1B-beta), and gamma (1B-gamma).

It localises to the cell membrane. Its function is as follows. EF-1-beta and EF-1-delta stimulate the exchange of GDP bound to EF-1-alpha to GTP. The sequence is that of Elongation factor 1-beta 1 from Arabidopsis thaliana (Mouse-ear cress).